Consider the following 355-residue polypeptide: Type II methyltransferase M.MthZI (355 aa).

This sequence belongs to the N(4)/N(6)-methyltransferase family. N(4) subfamily.

The catalysed reaction is a 2'-deoxycytidine in DNA + S-adenosyl-L-methionine = an N(4)-methyl-2'-deoxycytidine in DNA + S-adenosyl-L-homocysteine + H(+). Its function is as follows. A beta subtype methylase that recognizes the double-stranded sequence 5'-CTAG-3', methylates C-1 on both strands, and protects the DNA from cleavage by the MthZI endonuclease. The polypeptide is Type II methyltransferase M.MthZI (Methanothermobacter thermautotrophicus (Methanobacterium thermoformicicum)).